We begin with the raw amino-acid sequence, 498 residues long: Lysine--tRNA ligase (498 aa).

Mg(2+) contacts are provided by Glu408 and Glu415.

It belongs to the class-II aminoacyl-tRNA synthetase family. Homodimer. The cofactor is Mg(2+).

Its subcellular location is the cytoplasm. The enzyme catalyses tRNA(Lys) + L-lysine + ATP = L-lysyl-tRNA(Lys) + AMP + diphosphate. The sequence is that of Lysine--tRNA ligase from Listeria innocua serovar 6a (strain ATCC BAA-680 / CLIP 11262).